A 101-amino-acid chain; its full sequence is DNA-binding protein Fis (101 aa).

The H-T-H motif DNA-binding region spans 77–96 (QTRAANMLGINRGTLRKKLK).

The protein belongs to the transcriptional regulatory Fis family. As to quaternary structure, homodimer.

Functionally, activates ribosomal RNA transcription. Plays a direct role in upstream activation of rRNA promoters. In Shewanella sediminis (strain HAW-EB3), this protein is DNA-binding protein Fis.